The sequence spans 730 residues: uncharacterized protein (730 aa).

Positions 615 to 625 (FDKENSFDPSD) are enriched in basic and acidic residues. Disordered regions lie at residues 615 to 667 (FDKE…SSFS) and 684 to 730 (KSGS…FGKI). Composition is skewed to low complexity over residues 653–667 (SSSS…SSFS) and 684–701 (KSGS…NSSS). The segment covering 713-723 (KKKKKKKKKKS) has biased composition (basic residues).

This is an uncharacterized protein from Saccharomyces cerevisiae (strain ATCC 204508 / S288c) (Baker's yeast).